The sequence spans 64 residues: Long neurotoxin MS5 (64 aa).

Cystine bridges form between Cys3–Cys24, Cys6–Cys11, Cys17–Cys41, Cys45–Cys57, and Cys58–Cys63.

It belongs to the three-finger toxin family. Ancestral subfamily. In terms of tissue distribution, expressed by the venom gland.

It is found in the secreted. Functionally, produces peripheral paralysis by blocking neuromuscular transmission at the postsynaptic site. Very weak inhibitor of the endogenous nicotinic acetylcholine receptors (nAChR) in the human rhabdomyosarcoma TE 671 cell line. This neurotoxin is lethal to zebrafish by injection at the back of the dorsolateral region, but is not toxic to mice by intraperitoneal injection. The protein is Long neurotoxin MS5 of Micrurus surinamensis (Surinam coral snake).